The following is a 275-amino-acid chain: Large ribosomal subunit protein uL2 (275 aa).

The tract at residues 224-275 (AMNPVDHPHGGGEAKAGQGNPHPVTPWGVPTKGYKTRKNKRTQQFIVRDRRG) is disordered.

The protein belongs to the universal ribosomal protein uL2 family. In terms of assembly, part of the 50S ribosomal subunit. Forms a bridge to the 30S subunit in the 70S ribosome.

One of the primary rRNA binding proteins. Required for association of the 30S and 50S subunits to form the 70S ribosome, for tRNA binding and peptide bond formation. It has been suggested to have peptidyltransferase activity; this is somewhat controversial. Makes several contacts with the 16S rRNA in the 70S ribosome. This chain is Large ribosomal subunit protein uL2, found in Xanthomonas oryzae pv. oryzae (strain MAFF 311018).